The sequence spans 151 residues: MFRGANAISLDAKGRLAMPSRYRDELISRSSGQLIITIDAVDPCLCVYPLDEWELIETKLRALPSLREENRRLQRLLIGNAVDLELDGSGRFLVPPRLREYAKLDKRAMLVGQLNKFQLWDEDAWDAVSAADLAAIQQPGAMPDELRDLIL.

SpoVT-AbrB domains lie at 5-52 (ANAI…PLDE) and 81-124 (AVDL…DEDA).

This sequence belongs to the MraZ family. As to quaternary structure, forms oligomers.

The protein resides in the cytoplasm. The protein localises to the nucleoid. This is Transcriptional regulator MraZ from Pseudomonas fluorescens (strain SBW25).